Consider the following 82-residue polypeptide: uncharacterized protein (82 aa).

This is an uncharacterized protein from Archaeoglobus fulgidus (strain ATCC 49558 / DSM 4304 / JCM 9628 / NBRC 100126 / VC-16).